The chain runs to 321 residues: NADH-ubiquinone oxidoreductase chain 1 (321 aa).

8 helical membrane passes run 5 to 25 (LVTLNSLMYIIPILIAVAFLT), 74 to 94 (LLILSPLLAITAAMLIWAPIP), 104 to 124 (LGLLSILAISGMAVNSILWAG), 151 to 171 (GIILLSTLVLTGGFTIQLLTI), 175 to 195 (YTWLLTTSWPLTMMWFISTLA), 227 to 247 (FFLAEYANIITMNLLTCILFI), 256 to 276 (ELFLANLIAKTTILCLSFLWI), and 296 to 316 (FLPMTMALCLLHASLSISISG).

This sequence belongs to the complex I subunit 1 family.

Its subcellular location is the mitochondrion inner membrane. It carries out the reaction a ubiquinone + NADH + 5 H(+)(in) = a ubiquinol + NAD(+) + 4 H(+)(out). Core subunit of the mitochondrial membrane respiratory chain NADH dehydrogenase (Complex I) that is believed to belong to the minimal assembly required for catalysis. Complex I functions in the transfer of electrons from NADH to the respiratory chain. The immediate electron acceptor for the enzyme is believed to be ubiquinone. This is NADH-ubiquinone oxidoreductase chain 1 (MT-ND1) from Varanus baritji (Black-spotted ridge-tailed monitor).